An 832-amino-acid polypeptide reads, in one-letter code: DNA polymerase I, thermostable (832 aa).

The 86-residue stretch at 175 to 260 (RPDQWADYRA…DLPLEVDFAK (86 aa)) folds into the 5'-3' exonuclease domain. Positions 410–832 (ERLFANLWGR…IGEDWLSAKE (423 aa)) are polymerase.

The protein belongs to the DNA polymerase type-A family.

It catalyses the reaction DNA(n) + a 2'-deoxyribonucleoside 5'-triphosphate = DNA(n+1) + diphosphate. Functionally, in addition to polymerase activity, this DNA polymerase exhibits 5'-3' exonuclease activity. Unlikely to have 3'-5' exonuclease activity due to absence of a 3'-5' exonuclease domain. In Thermus aquaticus, this protein is DNA polymerase I, thermostable (polA).